The primary structure comprises 559 residues: Proline--tRNA ligase (559 aa).

It belongs to the class-II aminoacyl-tRNA synthetase family. ProS type 1 subfamily. As to quaternary structure, homodimer.

It is found in the cytoplasm. It catalyses the reaction tRNA(Pro) + L-proline + ATP = L-prolyl-tRNA(Pro) + AMP + diphosphate. In terms of biological role, catalyzes the attachment of proline to tRNA(Pro) in a two-step reaction: proline is first activated by ATP to form Pro-AMP and then transferred to the acceptor end of tRNA(Pro). As ProRS can inadvertently accommodate and process non-cognate amino acids such as alanine and cysteine, to avoid such errors it has two additional distinct editing activities against alanine. One activity is designated as 'pretransfer' editing and involves the tRNA(Pro)-independent hydrolysis of activated Ala-AMP. The other activity is designated 'posttransfer' editing and involves deacylation of mischarged Ala-tRNA(Pro). The misacylated Cys-tRNA(Pro) is not edited by ProRS. This is Proline--tRNA ligase from Ruthia magnifica subsp. Calyptogena magnifica.